Here is a 300-residue protein sequence, read N- to C-terminus: tRNA dimethylallyltransferase (300 aa).

18–25 (GPTATGKS) serves as a coordination point for ATP. A substrate-binding site is contributed by 20 to 25 (TATGKS). The segment at 43–46 (DSRQ) is interaction with substrate tRNA.

Belongs to the IPP transferase family. As to quaternary structure, monomer. Mg(2+) is required as a cofactor.

The enzyme catalyses adenosine(37) in tRNA + dimethylallyl diphosphate = N(6)-dimethylallyladenosine(37) in tRNA + diphosphate. Functionally, catalyzes the transfer of a dimethylallyl group onto the adenine at position 37 in tRNAs that read codons beginning with uridine, leading to the formation of N6-(dimethylallyl)adenosine (i(6)A). This chain is tRNA dimethylallyltransferase, found in Cyanothece sp. (strain PCC 7425 / ATCC 29141).